The following is a 718-amino-acid chain: Ophiobolin F synthase oblA (718 aa).

A (7Z)-ophiobola-7,19-dien-3-ol synthase region spans residues 1 to 320; sequence MACKYSTLID…RYNGPTKFNE (320 aa). 2 residues coordinate Mg(2+): D93 and D97. D93 contacts substrate. Positions 93–97 match the DDXXD 1 motif; sequence DDVID. Substrate-binding positions include 180–183, N224, 228–232, and 311–312; these read RALD, SFEKE, and RY. The short motif at 224-232 is the NSE/DTE element; the sequence is NDLFSFEKE. The segment at 321 to 718 is geranylfarnesyl diphosphate synthase; the sequence is LQLLRSEHGL…LRVMLELLKV (398 aa). The segment at 346–391 is disordered; the sequence is LVEGDCHESKPNELKRKRNGVSVDDEMRTNGTNGAKKPAHVSQPST. The segment covering 349 to 359 has biased composition (basic and acidic residues); the sequence is GDCHESKPNEL. Isopentenyl diphosphate is bound by residues K429, R432, and H461. 2 residues coordinate Mg(2+): D468 and D472. The DDXXD 2 motif lies at 468 to 472; that stretch reads DDLED. R477 is a dimethylallyl diphosphate binding site. R478 is an isopentenyl diphosphate binding site. Residues K555, T556, Q594, N601, K611, and K621 each coordinate dimethylallyl diphosphate.

In the N-terminal section; belongs to the terpene synthase family. It in the C-terminal section; belongs to the FPP/GGPP synthase family. Requires Mg(2+) as cofactor.

It carries out the reaction isopentenyl diphosphate + (2E,6E)-farnesyl diphosphate = (2E,6E,10E)-geranylgeranyl diphosphate + diphosphate. The catalysed reaction is isopentenyl diphosphate + (2E,6E,10E)-geranylgeranyl diphosphate = (2E,6E,10E,14E)-geranylfarnesyl diphosphate + diphosphate. The enzyme catalyses (2E,6E,10E,14E)-geranylfarnesyl diphosphate + H2O = ophiobolin F + diphosphate. Its pathway is secondary metabolite biosynthesis; terpenoid biosynthesis. In terms of biological role, bifunctional sesterterpene synthase; part of the gene cluster that mediates the biosynthesis of the sesterterpenes ophiobolins, fungal phytotoxins with potential anti-cancer activities. The first step of the pathway is performed by the sesterterpene synthase oblA that possesses both prenyl transferase and terpene cyclase activity, converting isopentenyl diphosphate and dimethylallyl diphosphate into geranylfarnesyl diphosphate (GFPP) and further converting GFPP into ophiobolin F, respectively. Other sesterterpenoids (C(25) terpenoids) are found as minor products of oblA. It is expected that ophiobolin F is then oxidized to ophiobolin A via ophiobolin C and ophiobolin B intermediates by the combined action of the cytochrome P450 monooxygenase oblB and the FAD-dependent oxidoreductase oblC. Although oblB catalyzes multistep oxygenations at C5 and C21/C7 in a relatively efficient manner, it is unable to convert ophiobolin F to ophiobolin C and produces instead several unexpected derivatives. In Aspergillus clavatus (strain ATCC 1007 / CBS 513.65 / DSM 816 / NCTC 3887 / NRRL 1 / QM 1276 / 107), this protein is Ophiobolin F synthase oblA.